The following is a 218-amino-acid chain: Attacin-B (218 aa).

The signal sequence occupies residues methionine 1 to alanine 17. The propeptide occupies valine 18–arginine 28.

The protein belongs to the attacin/sarcotoxin-2 family. Hemolymph (at protein level).

Its subcellular location is the secreted. Its function is as follows. Hemolymph antibacterial protein. This Drosophila melanogaster (Fruit fly) protein is Attacin-B (AttB).